Here is a 186-residue protein sequence, read N- to C-terminus: Adrenodoxin, mitochondrial (186 aa).

A mitochondrion-targeting transit peptide spans 1–58; that stretch reads MAARLLRVASAALGDTAGRWRLLARPRAGAGGLRGSRGPGLGGGAVATRTLSVSGRAQ. Residue S61 is modified to Phosphoserine. K64 bears the N6-acetyllysine; alternate mark. K64 carries the N6-succinyllysine; alternate modification. One can recognise a 2Fe-2S ferredoxin-type domain in the interval 65 to 169; it reads ITVHFINRDG…NMTVRVPDAV (105 aa). 4 residues coordinate [2Fe-2S] cluster: C104, C110, C113, and C150. K156 is subject to N6-succinyllysine. S175 is subject to Phosphoserine.

It belongs to the adrenodoxin/putidaredoxin family. In terms of assembly, interacts with CYP11A1. The cofactor is [2Fe-2S] cluster. In terms of tissue distribution, detected in adrenal cortex and corpus luteum (at protein level).

The protein resides in the mitochondrion matrix. Its function is as follows. Essential for the synthesis of various steroid hormones. Participates in the reduction of mitochondrial cytochrome P450 for steroidogenesis. Transfers electrons from adrenodoxin reductase to CYP11A1, a cytochrome P450 that catalyzes cholesterol side-chain cleavage to produce pregnenolone, the precursor of most steroid hormones. Does not form a ternary complex with adrenodoxin reductase and CYP11A1 but shuttles between the two enzymes to transfer electrons. The chain is Adrenodoxin, mitochondrial (FDX1) from Bos taurus (Bovine).